Reading from the N-terminus, the 485-residue chain is Pre-glycoprotein polyprotein GP complex (485 aa).

Glycine 2 is lipidated: N-myristoyl glycine; by host. Over 2-17 (GQFISFMQEIPTFLQE) the chain is Extracellular. Residues 18 to 33 (ALNIALVAVSLIAIIK) traverse the membrane as a helical segment. Residues 34 to 58 (GVVNLYKSGLFQFFVFLALAGRSCT) lie on the Cytoplasmic side of the membrane. Zn(2+) is bound at residue cysteine 57. Over 59–424 (EEAFKIGLHT…QGKTPLTLVD (366 aa)) the chain is Extracellular. 6 cysteine pairs are disulfide-bonded: cysteine 92/cysteine 226, cysteine 135/cysteine 164, cysteine 207/cysteine 213, cysteine 271/cysteine 284, cysteine 293/cysteine 302, and cysteine 356/cysteine 377. N-linked (GlcNAc...) asparagine; by host glycosylation is found at asparagine 95 and asparagine 105. N-linked (GlcNAc...) asparagine; by host glycans are attached at residues asparagine 166 and asparagine 178. Positions 250–286 (LKAFFSWSLTDSSGKDTPGGYCLEEWMLVAAKMKCFG) are fusion. Positions 287–355 (NTAVAKCNLN…KIRELMSVPY (69 aa)) are HR1. 4 N-linked (GlcNAc...) asparagine; by host glycosylation sites follow: asparagine 357, asparagine 365, asparagine 382, and asparagine 387. Residues 360 to 423 (KFWYVNHTLS…RQGKTPLTLV (64 aa)) form an HR2 region. Residues 425–445 (ICFWSTVFFTASLFLHLVGIP) form a helical membrane-spanning segment. Over 446–485 (THRHIRGEACPLPHRLNSLGGCRCGKYPNLKKPTVWRRGH) the chain is Cytoplasmic. Histidine 447, histidine 449, cysteine 455, histidine 459, cysteine 467, cysteine 469, and histidine 485 together coordinate Zn(2+).

Belongs to the arenaviridae GPC protein family. As to quaternary structure, interacts with glycoprotein G2. Part of the GP complex (GP-C) together with glycoprotein G1 and glycoprotein G2. The GP-complex interacts with protein Z, which interacts with ribonucleocapsid; these interactions may induce virion budding. In terms of assembly, homotrimer; disulfide-linked. In pre-fusion state, G1 homotrimers bind G2 homotrimers via ionic interactions. Part of the GP complex (GP-C) together with glycoprotein G2 and the stable signal peptide. Interacts with host TFRC. The GP-complex interacts with protein Z, which interacts with ribonucleocapsid; these interactions may induce virion budding. Homotrimer. Interacts with the stable signal peptide. In pre-fusion state, G2 homotrimers bind G1 homotrimers via ionic interactions. Part of the GP complex (GP-C) together with glycoprotein G1 and the stable signal peptide. Acidification in the endosome triggers rearrangements, which ultimately leads to a 6 helix bundle formed by the two heptad repeat domains (HR1 and HR2) in post-fusion state. The GP-complex interacts with protein Z, which interacts with ribonucleocapsid; these interactions may induce virion budding. In terms of processing, specific enzymatic cleavages in vivo yield mature proteins. GP-C polyprotein is cleaved in the endoplasmic reticulum by the host protease MBTPS1. Only cleaved glycoprotein is incorporated into virions. Post-translationally, the SSP remains stably associated with the GP complex following cleavage by signal peptidase and plays crucial roles in the trafficking of GP through the secretory pathway. Myristoylation is necessary for GP2-mediated fusion activity.

It is found in the virion membrane. Its subcellular location is the host endoplasmic reticulum membrane. The protein localises to the host Golgi apparatus membrane. The protein resides in the host cell membrane. Its function is as follows. Functions as a cleaved signal peptide that is retained as the third component of the GP complex (GP-C). Helps to stabilize the spike complex in its native conformation. The SSP is required for efficient glycoprotein expression, post-translational maturation cleavage of G1 and G2, glycoprotein transport to the cell surface plasma membrane, formation of infectious virus particles, and acid pH-dependent glycoprotein-mediated cell fusion. Forms the virion spikes together with glycoprotein G2. The glycoprotein spike trimers are connected to the underlying matrix. Mediates virus attachment to host TFRC. This attachment induces virion internalization predominantly through clathrin-mediated endocytosis. Functionally, forms the virion spikes together with glycoprotein G1. The glycoprotein spike trimers are connected to the underlying matrix. Class I viral fusion protein that directs fusion of viral and host endosomal membranes, leading to delivery of the nucleocapsid into the cytoplasm. Membrane fusion is mediated by irreversible conformational changes induced by acidification. This is Pre-glycoprotein polyprotein GP complex from Junin mammarenavirus (JUNV).